We begin with the raw amino-acid sequence, 159 residues long: uncharacterized protein (159 aa).

Disordered regions lie at residues 1-29 (MHQTHAIQRLEVLPSFSNESPTSRETSES) and 114-159 (TRGG…NENT). The span at 15 to 29 (SFSNESPTSRETSES) shows a compositional bias: polar residues.

This is an uncharacterized protein from Homo sapiens (Human).